Consider the following 188-residue polypeptide: Epididymal-specific lipocalin-5 (188 aa).

A signal peptide spans 1–19 (MENIMPFALLGLCVGLAAG). A disulfide bridge links C82 with C176.

Belongs to the calycin superfamily. Lipocalin family. There are two similar, immunologically cross-reacting forms of this protein, designated B and C, which probably result from different processing of the amino end. In terms of processing, the N-terminus of form C is probably blocked. Synthesized exclusively in the proximal part (caput epididymidis) of the epididymis. It makes up a substantial part of the total protein in the epididymal luminal fluid and binds to the sperm membrane.

The protein resides in the secreted. Associates with spermatozoa in the epididymal fluid but does not bind tightly to them. Binds both all-trans and 9-cis retinoic acid. May act as a retinoid carrier protein which is required for epididymal function and/or sperm maturation. The sequence is that of Epididymal-specific lipocalin-5 (Lcn5) from Rattus norvegicus (Rat).